A 207-amino-acid chain; its full sequence is Probable flagellin 2 (207 aa).

The propeptide occupies 1–14 (MRVGSRKLRRDEKG).

It belongs to the archaeal flagellin family.

Its subcellular location is the archaeal flagellum. In terms of biological role, flagellin is the subunit protein which polymerizes to form the filaments of archaeal flagella. This Archaeoglobus fulgidus (strain ATCC 49558 / DSM 4304 / JCM 9628 / NBRC 100126 / VC-16) protein is Probable flagellin 2 (flaB2).